The sequence spans 289 residues: Aquaporin PIP1-2 (289 aa).

Positions 1-36 (MEGKEEDVRLGANKFSERQPIGTAAQGAADDKDYKE) are disordered. A run of 2 helical transmembrane segments spans residues 58–78 (IAEF…VMGV) and 93–115 (IAWS…SGGH). Positions 117 to 119 (NPA) match the NPA 1 motif. The next 3 membrane-spanning stretches (helical) occupy residues 136-156 (LFYI…VKGF), 178-198 (GDGL…VFSA), and 212-232 (ILAP…TIPI). Positions 238–240 (NPA) match the NPA 2 motif. The chain crosses the membrane as a helical span at residues 260–280 (IFWVGPFIGAALAAIYHQVII).

It belongs to the MIP/aquaporin (TC 1.A.8) family. PIP (TC 1.A.8.11) subfamily. In terms of assembly, interacts with PIP2-1 to form heteromers. Highly expressed in developing tassels and at lower levels in roots, shoots, ears and embryos. Expressed in the root growing zone at 5-6 mm from the root tip. Expressed in xylem parenchyma.

The protein resides in the cell membrane. In terms of biological role, water channel required to facilitate the transport of water across cell membrane. Active as heteromers with PIP1-1, PIP2-1, PIP2-4 or PIP2-5, but not as homomers. The polypeptide is Aquaporin PIP1-2 (PIP1-2) (Zea mays (Maize)).